Reading from the N-terminus, the 107-residue chain is YcgL domain-containing protein Psyc_0800 (107 aa).

In terms of domain architecture, YcgL spans methionine 1–leucine 95.

This is YcgL domain-containing protein Psyc_0800 from Psychrobacter arcticus (strain DSM 17307 / VKM B-2377 / 273-4).